Here is a 260-residue protein sequence, read N- to C-terminus: Triosephosphate isomerase (260 aa).

Residue 11-13 coordinates substrate; sequence NWK. His-103 functions as the Electrophile in the catalytic mechanism. Glu-175 serves as the catalytic Proton acceptor. Substrate is bound by residues Gly-181, Ser-220, and 241–242; that span reads GG.

This sequence belongs to the triosephosphate isomerase family. Homodimer.

It is found in the cytoplasm. The catalysed reaction is D-glyceraldehyde 3-phosphate = dihydroxyacetone phosphate. Its pathway is carbohydrate biosynthesis; gluconeogenesis. The protein operates within carbohydrate degradation; glycolysis; D-glyceraldehyde 3-phosphate from glycerone phosphate: step 1/1. Involved in the gluconeogenesis. Catalyzes stereospecifically the conversion of dihydroxyacetone phosphate (DHAP) to D-glyceraldehyde-3-phosphate (G3P). The sequence is that of Triosephosphate isomerase from Shewanella amazonensis (strain ATCC BAA-1098 / SB2B).